Consider the following 276-residue polypeptide: Glucosamine-6-phosphate deaminase 2 (276 aa).

Catalysis depends on Asp72, which acts as the Proton acceptor; for enolization step. A coiled-coil region spans residues 105–130 (HILDGNAADLQAECDAFENKIKEAGG). Asp141 functions as the For ring-opening step in the catalytic mechanism. The active-site Proton acceptor; for ring-opening step is the His143. Glu148 functions as the For ring-opening step in the catalytic mechanism. At Thr161 the chain carries Phosphothreonine.

Belongs to the glucosamine/galactosamine-6-phosphate isomerase family. In terms of assembly, homohexamer. Ubiquitous, with highest expression detected in testis, ovary, placenta, and heart.

Its subcellular location is the cytoplasm. It carries out the reaction alpha-D-glucosamine 6-phosphate + H2O = beta-D-fructose 6-phosphate + NH4(+). The protein operates within nucleotide-sugar biosynthesis; UDP-N-acetyl-alpha-D-glucosamine biosynthesis; alpha-D-glucosamine 6-phosphate from D-fructose 6-phosphate: step 1/1. Its activity is regulated as follows. Allosterically activated by N-acetylglucosamine-6-phosphate (GlcNAc6P). Catalyzes the reversible conversion of alpha-D-glucosamine 6-phosphate (GlcN-6P) into beta-D-fructose 6-phosphate (Fru-6P) and ammonium ion, a regulatory reaction step in de novo uridine diphosphate-N-acetyl-alpha-D-glucosamine (UDP-GlcNAc) biosynthesis via hexosamine pathway. Deamination is coupled to aldo-keto isomerization mediating the metabolic flux from UDP-GlcNAc toward Fru-6P. At high ammonium level can drive amination and isomerization of Fru-6P toward hexosamines and UDP-GlcNAc synthesis. Has a role in fine tuning the metabolic fluctuations of cytosolic UDP-GlcNAc and their effects on hyaluronan synthesis that occur during tissue remodeling. In Homo sapiens (Human), this protein is Glucosamine-6-phosphate deaminase 2.